The following is a 584-amino-acid chain: Proteasome-associated ATPase (584 aa).

Positions 16 to 91 (EELASQVRLL…KEEVDRLAQP (76 aa)) form a coiled coil. 273–278 (GCGKTL) contacts ATP. The segment at 583 to 584 (YL) is docks into pockets in the proteasome alpha-ring.

It belongs to the AAA ATPase family. Homohexamer. Assembles into a hexameric ring structure that caps the 20S proteasome core. Strongly interacts with the prokaryotic ubiquitin-like protein Pup through a hydrophobic interface; the interacting region of ARC lies in its N-terminal coiled-coil domain. There is one Pup binding site per ARC hexamer ring. Upon ATP-binding, the C-terminus of ARC interacts with the alpha-rings of the proteasome core, possibly by binding to the intersubunit pockets.

Its pathway is protein degradation; proteasomal Pup-dependent pathway. ATPase which is responsible for recognizing, binding, unfolding and translocation of pupylated proteins into the bacterial 20S proteasome core particle. May be essential for opening the gate of the 20S proteasome via an interaction with its C-terminus, thereby allowing substrate entry and access to the site of proteolysis. Thus, the C-termini of the proteasomal ATPase may function like a 'key in a lock' to induce gate opening and therefore regulate proteolysis. This Nocardioides sp. (strain ATCC BAA-499 / JS614) protein is Proteasome-associated ATPase.